The chain runs to 230 residues: Urease accessory protein UreF (230 aa).

Belongs to the UreF family. In terms of assembly, ureD, UreF and UreG form a complex that acts as a GTP-hydrolysis-dependent molecular chaperone, activating the urease apoprotein by helping to assemble the nickel containing metallocenter of UreC. The UreE protein probably delivers the nickel.

Its subcellular location is the cytoplasm. Its function is as follows. Required for maturation of urease via the functional incorporation of the urease nickel metallocenter. The polypeptide is Urease accessory protein UreF (Cupriavidus necator (strain ATCC 17699 / DSM 428 / KCTC 22496 / NCIMB 10442 / H16 / Stanier 337) (Ralstonia eutropha)).